A 337-amino-acid polypeptide reads, in one-letter code: Tetraacyldisaccharide 4'-kinase (337 aa).

55–62 (TIGGNGKT) contributes to the ATP binding site.

The protein belongs to the LpxK family.

It carries out the reaction a lipid A disaccharide + ATP = a lipid IVA + ADP + H(+). It participates in glycolipid biosynthesis; lipid IV(A) biosynthesis; lipid IV(A) from (3R)-3-hydroxytetradecanoyl-[acyl-carrier-protein] and UDP-N-acetyl-alpha-D-glucosamine: step 6/6. Functionally, transfers the gamma-phosphate of ATP to the 4'-position of a tetraacyldisaccharide 1-phosphate intermediate (termed DS-1-P) to form tetraacyldisaccharide 1,4'-bis-phosphate (lipid IVA). In Blochmanniella pennsylvanica (strain BPEN), this protein is Tetraacyldisaccharide 4'-kinase.